The following is a 672-amino-acid chain: Glycerophosphocholine phosphodiesterase GPCPD1 (672 aa).

A CBM20 domain is found at 1-115; sequence MTPSQVAFEI…IIIDDGQFGI (115 aa). Substrate is bound by residues lysine 70 and 88 to 89; that span reads HK. 2 positions are modified to phosphoserine: serine 175 and serine 424. One can recognise a GP-PDE domain in the interval 318 to 618; that stretch reads PLDVGHRGAG…DRIYDWMPEQ (301 aa). Tyrosine 608 carries the post-translational modification Phosphotyrosine.

It belongs to the glycerophosphoryl diester phosphodiesterase family. In terms of tissue distribution, widely expressed, with highest expression in spinal chord.

Its subcellular location is the cytoplasm. The protein localises to the cytosol. It carries out the reaction sn-glycerol 3-phosphocholine + H2O = sn-glycerol 3-phosphate + choline + H(+). Its function is as follows. May be involved in the negative regulation of skeletal muscle differentiation, independently of its glycerophosphocholine phosphodiesterase activity. The polypeptide is Glycerophosphocholine phosphodiesterase GPCPD1 (GPCPD1) (Homo sapiens (Human)).